The following is a 188-amino-acid chain: Peptidyl-tRNA hydrolase (188 aa).

A tRNA-binding site is contributed by tyrosine 15. The active-site Proton acceptor is histidine 20. TRNA-binding residues include phenylalanine 66, asparagine 68, and asparagine 114.

It belongs to the PTH family. Monomer.

Its subcellular location is the cytoplasm. The catalysed reaction is an N-acyl-L-alpha-aminoacyl-tRNA + H2O = an N-acyl-L-amino acid + a tRNA + H(+). Functionally, hydrolyzes ribosome-free peptidyl-tRNAs (with 1 or more amino acids incorporated), which drop off the ribosome during protein synthesis, or as a result of ribosome stalling. Catalyzes the release of premature peptidyl moieties from peptidyl-tRNA molecules trapped in stalled 50S ribosomal subunits, and thus maintains levels of free tRNAs and 50S ribosomes. In Lactococcus lactis subsp. lactis (strain IL1403) (Streptococcus lactis), this protein is Peptidyl-tRNA hydrolase.